Here is an 85-residue protein sequence, read N- to C-terminus: Small ribosomal subunit protein bS16 (85 aa).

The protein belongs to the bacterial ribosomal protein bS16 family.

In Pelobacter propionicus (strain DSM 2379 / NBRC 103807 / OttBd1), this protein is Small ribosomal subunit protein bS16.